Here is a 446-residue protein sequence, read N- to C-terminus: Maturase K (446 aa).

This sequence belongs to the intron maturase 2 family. MatK subfamily.

The protein resides in the plastid. The protein localises to the chloroplast. Functionally, usually encoded in the trnK tRNA gene intron. Probably assists in splicing its own and other chloroplast group II introns. This is Maturase K from Phalaenopsis aphrodite subsp. formosana (Moth orchid).